Reading from the N-terminus, the 126-residue chain is Holo-[acyl-carrier-protein] synthase (126 aa).

Mg(2+) is bound by residues D9 and E58.

Belongs to the P-Pant transferase superfamily. AcpS family. Mg(2+) serves as cofactor.

It is found in the cytoplasm. It carries out the reaction apo-[ACP] + CoA = holo-[ACP] + adenosine 3',5'-bisphosphate + H(+). Functionally, transfers the 4'-phosphopantetheine moiety from coenzyme A to a Ser of acyl-carrier-protein. This Pectobacterium carotovorum subsp. carotovorum (strain PC1) protein is Holo-[acyl-carrier-protein] synthase.